Here is a 1207-residue protein sequence, read N- to C-terminus: ATP-dependent helicase/nuclease subunit A (1207 aa).

The UvrD-like helicase ATP-binding domain maps to 2 to 472 (PQFTKEQQQA…ILLSDNFRST (471 aa)). 23 to 30 (ASAGSGKT) contributes to the ATP binding site. Positions 492–783 (GGIDYSKEGQ…RLMTIHGSKG (292 aa)) constitute a UvrD-like helicase C-terminal domain.

The protein belongs to the helicase family. AddA subfamily. As to quaternary structure, heterodimer of AddA and AddB/RexB. Mg(2+) serves as cofactor.

It carries out the reaction Couples ATP hydrolysis with the unwinding of duplex DNA by translocating in the 3'-5' direction.. The catalysed reaction is ATP + H2O = ADP + phosphate + H(+). In terms of biological role, the heterodimer acts as both an ATP-dependent DNA helicase and an ATP-dependent, dual-direction single-stranded exonuclease. Recognizes the chi site generating a DNA molecule suitable for the initiation of homologous recombination. The AddA nuclease domain is required for chi fragment generation; this subunit has the helicase and 3' -&gt; 5' nuclease activities. This Lactobacillus acidophilus (strain ATCC 700396 / NCK56 / N2 / NCFM) protein is ATP-dependent helicase/nuclease subunit A.